We begin with the raw amino-acid sequence, 424 residues long: Enolase (424 aa).

Residue Gln-165 coordinates (2R)-2-phosphoglycerate. Glu-207 acts as the Proton donor in catalysis. The Mg(2+) site is built by Asp-244, Glu-283, and Asp-310. Lys-335, Arg-364, Ser-365, and Lys-386 together coordinate (2R)-2-phosphoglycerate. Residue Lys-335 is the Proton acceptor of the active site.

This sequence belongs to the enolase family. Mg(2+) serves as cofactor.

It is found in the cytoplasm. Its subcellular location is the secreted. The protein resides in the cell surface. It carries out the reaction (2R)-2-phosphoglycerate = phosphoenolpyruvate + H2O. Its pathway is carbohydrate degradation; glycolysis; pyruvate from D-glyceraldehyde 3-phosphate: step 4/5. Functionally, catalyzes the reversible conversion of 2-phosphoglycerate (2-PG) into phosphoenolpyruvate (PEP). It is essential for the degradation of carbohydrates via glycolysis. In Chlamydia trachomatis serovar L2 (strain ATCC VR-902B / DSM 19102 / 434/Bu), this protein is Enolase.